The primary structure comprises 191 residues: UPF0301 protein Bphy_2327 (191 aa).

The protein belongs to the UPF0301 (AlgH) family.

The polypeptide is UPF0301 protein Bphy_2327 (Paraburkholderia phymatum (strain DSM 17167 / CIP 108236 / LMG 21445 / STM815) (Burkholderia phymatum)).